Reading from the N-terminus, the 257-residue chain is 24 kDa outer membrane protein (257 aa).

An N-terminal signal peptide occupies residues 1–21 (MKNKSKLLACCLMALPISSFS).

This sequence belongs to the MipA/OmpV family.

Its subcellular location is the cell outer membrane. In Pasteurella multocida (strain Pm70), this protein is 24 kDa outer membrane protein.